The chain runs to 1377 residues: MLKSIQRNGKKQKNGSKDKEPTPPKEQPLVNGNHDMNGHASDSVAPTEQQNGETKKKSDSEVMEIIQDAGFTVQIMSPGVEPLSIQVSSMELVQEIHQLLMDREDTCHRTCFSLQLDGVTLDNFAELKNVEGLKEGSVIKVVEEPYTMREARIHVRHVRDLLKSMDPADAYNGVDCSSLTFLHTITAGDILEKKKGRSDSVDCTPPEYIMPGAKERPLLPLQPGVGKKGPQPLKVLTTSAWNPPPGPRKLHGDLMYLYVVTMEDKRFHISACPRGFYINQSTDDTFEPRPDNPSYLCHSLIDLLSQISPTFRRCFAQMQKKRTQRHPFERVATPYQVYTWSAPTLDHTIDAIRAEDTFSSKLGYEEHIPGQTRDWNEELQTTRELPRETLPERLLRERAIFKVHSDFVTAATRGAMAVIDGNVMAINPGEDAKMQMFIWNNIFFSLGFDVRDHYKELGGDAAAFVAPRNDLHGVRVYSAVDVEGLYTLGTVVIDYRGYRVTAQSIIPGILEREQEQSVVYGSIDFGKTVLSHEKYLELLNNAGKHLKIYPHSVLNDDEEEIELCSSVECKGIIGNDGRHYILDLLRTFPPDVNFLKLDEELSKDCKAFGFPIEHKHKLSCLRQELLEAFIESRYLLFIKHAAFQLQQLNTNKRQQKQDTPKEETKAIEPAAKEDSANNNKEEPAAKKGEPKAATGGVPKVETEEAKKLMESLLSSDEKNESREVVKRACEAVGSLKDYEFDIRFNPDVYSPGIQHVDNPNAANSIKKQKQLVKDAAEFLVKHQIPSFVHDCLDHTAAPMDGSTLTETLHSRGINVRYLGKVANLLAKIKQLEYLHTIAVSELIIRAAKHIFVTYMQNTEMMSMAAAISHFLNCFLTTATSVSSESDVLTKSGSSGKQQRKQNKRTAAGGGKGGKSSFQCTQDNNEWQLLTSKSLWAQIQQELKSYWDYDLLPAGTVDSADPVVTHNHLQKISLLRAFCLKTGVQILLREYNFETKNKPTFNENDIVNVFPVVKHINPRASDAYNFYTTGQTKIQQGYFKDGYDLISEALNLLNNVYGAMHPENAQCLRMLARLSYIMGDPQEALAIQQRAVLMSERVNGIDHPYTIAEYAPLALYCFANSQISTALKLLYRARYLATIVCGDNHPDIALLDSNISLILHAVGEYELSLRFLEHALALNIKYYGEKSLKVAVSYHLVARTQSCMGDFRSALNNEKETYAIYKQQLGEAHEKTQESSECLRHLTQQAVVLQKKMNDIYSNGKLTTGLPPIHIQPPSMGSVLDMLNAINGIIFVQISSKEIANLKNEIEKRQKEGGAAGESSVAQANQEEVDRLLTETMAKTAAGIPFEEQDNYELPLPAATTGDEASSSSKANPVASSS.

A disordered region spans residues 1 to 61 (MLKSIQRNGK…GETKKKSDSE (61 aa)). The region spanning 353-595 (RAEDTFSSKL…RTFPPDVNFL (243 aa)) is the Clu domain. The stretch at 519 to 552 (VYGSIDFGKTVLSHEKYLELLNNAGKHLKIYPHS) is one TPR 1 repeat. Disordered regions lie at residues 651–700 (NKRQ…VPKV) and 886–917 (DVLT…KSSF). The segment covering 655 to 690 (QKQDTPKEETKAIEPAAKEDSANNNKEEPAAKKGEP) has biased composition (basic and acidic residues). A compositionally biased stretch (polar residues) spans 886-896 (DVLTKSGSSGK). TPR repeat units follow at residues 1022-1055 (AYNF…LNNV), 1148-1181 (ALLD…NIKY), and 1183-1216 (GEKS…EKET). The interval 1310–1377 (KEGGAAGESS…SKANPVASSS (68 aa)) is disordered. Over residues 1364–1377 (ASSSSKANPVASSS) the composition is skewed to low complexity.

The protein belongs to the CLU family.

The protein localises to the cytoplasm. In terms of biological role, mRNA-binding protein involved in proper cytoplasmic distribution of mitochondria. The protein is Clustered mitochondria protein homolog of Culex quinquefasciatus (Southern house mosquito).